Here is a 481-residue protein sequence, read N- to C-terminus: Proline--tRNA ligase (481 aa).

The protein belongs to the class-II aminoacyl-tRNA synthetase family. ProS type 3 subfamily. Homodimer.

The protein localises to the cytoplasm. The enzyme catalyses tRNA(Pro) + L-proline + ATP = L-prolyl-tRNA(Pro) + AMP + diphosphate. Its function is as follows. Catalyzes the attachment of proline to tRNA(Pro) in a two-step reaction: proline is first activated by ATP to form Pro-AMP and then transferred to the acceptor end of tRNA(Pro). This chain is Proline--tRNA ligase, found in Chlorobium chlorochromatii (strain CaD3).